The following is a 124-amino-acid chain: Small ribosomal subunit protein uS12 (124 aa).

The residue at position 89 (Asp-89) is a 3-methylthioaspartic acid.

It belongs to the universal ribosomal protein uS12 family. As to quaternary structure, part of the 30S ribosomal subunit. Contacts proteins S8 and S17. May interact with IF1 in the 30S initiation complex.

Its function is as follows. With S4 and S5 plays an important role in translational accuracy. In terms of biological role, interacts with and stabilizes bases of the 16S rRNA that are involved in tRNA selection in the A site and with the mRNA backbone. Located at the interface of the 30S and 50S subunits, it traverses the body of the 30S subunit contacting proteins on the other side and probably holding the rRNA structure together. The combined cluster of proteins S8, S12 and S17 appears to hold together the shoulder and platform of the 30S subunit. This is Small ribosomal subunit protein uS12 from Glaesserella parasuis serovar 5 (strain SH0165) (Haemophilus parasuis).